Consider the following 201-residue polypeptide: MKQHRENLPIILASSSPARIELLNRIKIIPSQIIPADIDETPNLRELPAPLAIRLAYEKAIKVASQVEESAIIIAADTVAAVGRRILPKATTYEEVKNCIKMVSGRRHRVYTGLCIIKTENDQLTVKQKIVQTIVKFKKLSDEEINFYCSLDEGRGKAGGCKISGYAEAFISFISGSYSNVMGLPLFETANALTSLGFKVY.

Asp77 (proton acceptor) is an active-site residue.

The protein belongs to the Maf family. A divalent metal cation is required as a cofactor.

The protein localises to the cytoplasm. It catalyses the reaction a ribonucleoside 5'-triphosphate + H2O = a ribonucleoside 5'-phosphate + diphosphate + H(+). It carries out the reaction a 2'-deoxyribonucleoside 5'-triphosphate + H2O = a 2'-deoxyribonucleoside 5'-phosphate + diphosphate + H(+). In terms of biological role, nucleoside triphosphate pyrophosphatase. May have a dual role in cell division arrest and in preventing the incorporation of modified nucleotides into cellular nucleic acids. This is Nucleoside triphosphate pyrophosphatase from Rickettsia akari (strain Hartford).